Reading from the N-terminus, the 50-residue chain is Bacterioferritin (50 aa).

The Ferritin-like diiron domain maps to 1–50; the sequence is MKGDPKVIDYLNKALRHELTAINQYWLHYRLLDNWGIKDLAKKWRAESIE. Glu18 is a binding site for Fe cation.

It belongs to the bacterioferritin family. As to quaternary structure, homooligomer of 24 subunits, arranged as 12 dimers, that are packed together to form an approximately spherical molecule with a central cavity, in which large amounts of iron can be deposited. Heme b is required as a cofactor.

The catalysed reaction is 4 Fe(2+) + O2 + 4 H(+) = 4 Fe(3+) + 2 H2O. The enzyme catalyses Fe(2+)(in) = Fe(2+)(out). Functionally, iron-storage protein, whose ferroxidase center binds Fe(2+), oxidizes it using dioxygen to Fe(3+), and participates in the subsequent Fe(3+) oxide mineral core formation within the central cavity of the BFR protein shell. May act as one of the electron carriers in the reverse electron-transport system from cytochrome c-552 to NADP(+). The protein is Bacterioferritin (bfr) of Nitrobacter winogradskyi (Nitrobacter agilis).